A 591-amino-acid polypeptide reads, in one-letter code: MPSSQISHQDPELGQTSSGSSSIKEKAEPQLYAGPIDPARRPDVFQEGFEDVSVTDDDNDNELLRKMGYQPVLHRSFEFFESFAASFASLDVVSGVRLTFSWGISFGGPAAYWSAMLVTGFCSIVTAACLAEICSALPAAGSIYLWAAESAGPRFGRFVSFLVAWWSTTAWTTFVASITQSTANFIFAEVSTFNNPWPTNDSDVKFRAVQWIVAEVLLVFTILLNQVPPRYYKWIFKASMLLMFIDYVMNIIWVPVATSKKPDGFRSAKWVFTETIYDQAGYIKEVDDANGNPIASLSKIVPKGWQWCLSYFATAGVIVGYDASGHIAEETKDASIKAARGIFYSTVTSFIVAFSLAILYLFCCPDLDTFTAILYNDNSPQPFVNFYSYLLGRGGHVVMNVVIILEIFLNGVVSVLACSRLVFAVSRDGVLPFSNWISQVSKTGQPKNAITVIYIVSALLLCTILPSAVAFTSLVSAAGAPSFAAYAVLAFCRLFITRDKFPKGRWSLGWLSKPCLVITLVYNLFALVVNVSPYTYPVTGPSFNYAVVIMGGVSIFAIICTIVIPKSRWVANRYRYESDSEHSASVKELKV.

Residues 1–22 are compositionally biased toward polar residues; it reads MPSSQISHQDPELGQTSSGSSS. The interval 1 to 42 is disordered; sequence MPSSQISHQDPELGQTSSGSSSIKEKAEPQLYAGPIDPARRP. The next 5 helical transmembrane spans lie at 98-118, 342-362, 397-417, 450-470, and 545-565; these read LTFSWGISFGGPAAYWSAMLV, IFYSTVTSFIVAFSLAILYLF, VVMNVVIILEIFLNGVVSVLA, ITVIYIVSALLLCTILPSAVA, and YAVVIMGGVSIFAIICTIVIP. Residue S585 is modified to Phosphoserine.

It belongs to the amino acid-polyamine-organocation (APC) superfamily.

It is found in the endoplasmic reticulum membrane. The protein localises to the cell membrane. Thiamine transporter involved in the cellular uptake of thiamine. Pyrithiamine, oxythiamine, amprolium, and the thiazole part of thiamine have been shown to be also substrates of thi9. The protein is Thiamine transporter thi9 (thi9) of Schizosaccharomyces pombe (strain 972 / ATCC 24843) (Fission yeast).